The following is a 448-amino-acid chain: uncharacterized protein (448 aa).

K280 is modified (N6-(pyridoxal phosphate)lysine).

Belongs to the class-III pyridoxal-phosphate-dependent aminotransferase family.

It is found in the cytoplasm. The protein localises to the mitochondrion. This is an uncharacterized protein from Schizosaccharomyces pombe (strain 972 / ATCC 24843) (Fission yeast).